Here is a 173-residue protein sequence, read N- to C-terminus: Co-chaperone protein HscB (173 aa).

Residues 2–74 (DYFTLFGLPA…LKRAEYMLSL (73 aa)) enclose the J domain.

This sequence belongs to the HscB family. Interacts with HscA and stimulates its ATPase activity. Interacts with IscU.

In terms of biological role, co-chaperone involved in the maturation of iron-sulfur cluster-containing proteins. Seems to help targeting proteins to be folded toward HscA. The polypeptide is Co-chaperone protein HscB (Photorhabdus laumondii subsp. laumondii (strain DSM 15139 / CIP 105565 / TT01) (Photorhabdus luminescens subsp. laumondii)).